Consider the following 181-residue polypeptide: Crossover junction endodeoxyribonuclease RuvC (181 aa).

Catalysis depends on residues D7, E67, and D139. Residues D7, E67, and D139 each contribute to the Mg(2+) site.

This sequence belongs to the RuvC family. Homodimer which binds Holliday junction (HJ) DNA. The HJ becomes 2-fold symmetrical on binding to RuvC with unstacked arms; it has a different conformation from HJ DNA in complex with RuvA. In the full resolvosome a probable DNA-RuvA(4)-RuvB(12)-RuvC(2) complex forms which resolves the HJ. It depends on Mg(2+) as a cofactor.

The protein resides in the cytoplasm. It catalyses the reaction Endonucleolytic cleavage at a junction such as a reciprocal single-stranded crossover between two homologous DNA duplexes (Holliday junction).. Functionally, the RuvA-RuvB-RuvC complex processes Holliday junction (HJ) DNA during genetic recombination and DNA repair. Endonuclease that resolves HJ intermediates. Cleaves cruciform DNA by making single-stranded nicks across the HJ at symmetrical positions within the homologous arms, yielding a 5'-phosphate and a 3'-hydroxyl group; requires a central core of homology in the junction. The consensus cleavage sequence is 5'-(A/T)TT(C/G)-3'. Cleavage occurs on the 3'-side of the TT dinucleotide at the point of strand exchange. HJ branch migration catalyzed by RuvA-RuvB allows RuvC to scan DNA until it finds its consensus sequence, where it cleaves and resolves the cruciform DNA. This is Crossover junction endodeoxyribonuclease RuvC from Ralstonia nicotianae (strain ATCC BAA-1114 / GMI1000) (Ralstonia solanacearum).